Consider the following 440-residue polypeptide: Chromosome partition protein MukF (440 aa).

The segment at 208–236 (LSETSGTLRELQDTLEAAGDKLQANLLRI) is leucine-zipper.

It belongs to the MukF family. In terms of assembly, interacts, and probably forms a ternary complex, with MukE and MukB via its C-terminal region. The complex formation is stimulated by calcium or magnesium. It is required for an interaction between MukE and MukB.

The protein resides in the cytoplasm. It is found in the nucleoid. Involved in chromosome condensation, segregation and cell cycle progression. May participate in facilitating chromosome segregation by condensation DNA from both sides of a centrally located replisome during cell division. Not required for mini-F plasmid partitioning. Probably acts via its interaction with MukB and MukE. Overexpression results in anucleate cells. It has a calcium binding activity. The polypeptide is Chromosome partition protein MukF (Yersinia pestis).